The sequence spans 370 residues: MKKRIALLPGDGIGPEVLDAAVDVLKSVAEHYQHEFEFEYGLIGGAAIDEAGAPLPEETVAACKAADAILLGAVGGPKWDQNPSELRPEKGLLAIRKQLDLFANLRPVKVFESLAGASPLKTEYIEGVDFVIVRELTGGLYFGKPSEQYVNQNGEEEAVDTLFYKKSEMERVIREAFQMAQSRKGKVTSVDKANVLESSKLWRKTAEEVAKEFPDVKLEHMLVDNAAMQLIYAPGQFDIIVTENMFGDILSDEASMLTGSLGMLPSASLSSSGLHLYEPVHGSAPDIAGQNIANPLAAILSAAMMLRTSFGLEAEAQAVEHAVDQVLRAGKRTKDLAKGSEHCTTQSITGEVKAALADDNAISNIMTAYV.

Position 76–89 (76–89) interacts with NAD(+); it reads GPKWDQNPSELRPE. Arg-96, Arg-106, Arg-134, and Asp-224 together coordinate substrate. Mg(2+) is bound by residues Asp-224, Asp-248, and Asp-252. 282 to 294 contacts NAD(+); the sequence is GSAPDIAGQNIAN.

Belongs to the isocitrate and isopropylmalate dehydrogenases family. LeuB type 1 subfamily. As to quaternary structure, homodimer. Mg(2+) is required as a cofactor. Requires Mn(2+) as cofactor.

Its subcellular location is the cytoplasm. The enzyme catalyses (2R,3S)-3-isopropylmalate + NAD(+) = 4-methyl-2-oxopentanoate + CO2 + NADH. It functions in the pathway amino-acid biosynthesis; L-leucine biosynthesis; L-leucine from 3-methyl-2-oxobutanoate: step 3/4. Catalyzes the oxidation of 3-carboxy-2-hydroxy-4-methylpentanoate (3-isopropylmalate) to 3-carboxy-4-methyl-2-oxopentanoate. The product decarboxylates to 4-methyl-2 oxopentanoate. This chain is 3-isopropylmalate dehydrogenase, found in Bacillus licheniformis (strain ATCC 14580 / DSM 13 / JCM 2505 / CCUG 7422 / NBRC 12200 / NCIMB 9375 / NCTC 10341 / NRRL NRS-1264 / Gibson 46).